Here is a 335-residue protein sequence, read N- to C-terminus: Anthranilate phosphoribosyltransferase (335 aa).

Residues G79, 82–83 (GD), S87, 89–92 (NIST), 107–115 (KHGNRSITS), and S119 each bind 5-phospho-alpha-D-ribose 1-diphosphate. Anthranilate is bound at residue G79. S91 serves as a coordination point for Mg(2+). N110 provides a ligand contact to anthranilate. R165 serves as a coordination point for anthranilate. Mg(2+) is bound by residues D224 and E225.

Belongs to the anthranilate phosphoribosyltransferase family. As to quaternary structure, homodimer. Mg(2+) serves as cofactor.

It catalyses the reaction N-(5-phospho-beta-D-ribosyl)anthranilate + diphosphate = 5-phospho-alpha-D-ribose 1-diphosphate + anthranilate. It functions in the pathway amino-acid biosynthesis; L-tryptophan biosynthesis; L-tryptophan from chorismate: step 2/5. Catalyzes the transfer of the phosphoribosyl group of 5-phosphorylribose-1-pyrophosphate (PRPP) to anthranilate to yield N-(5'-phosphoribosyl)-anthranilate (PRA). The polypeptide is Anthranilate phosphoribosyltransferase (Lactococcus lactis subsp. lactis (strain IL1403) (Streptococcus lactis)).